The chain runs to 397 residues: Phosphoglycerate kinase (397 aa).

Residues 19 to 21 (DFN), arginine 35, 58 to 61 (HLGR), arginine 117, and arginine 150 each bind substrate. ATP is bound by residues lysine 201, glutamate 323, and 349-352 (GGDS).

The protein belongs to the phosphoglycerate kinase family. As to quaternary structure, monomer.

The protein resides in the cytoplasm. The catalysed reaction is (2R)-3-phosphoglycerate + ATP = (2R)-3-phospho-glyceroyl phosphate + ADP. It functions in the pathway carbohydrate degradation; glycolysis; pyruvate from D-glyceraldehyde 3-phosphate: step 2/5. The sequence is that of Phosphoglycerate kinase from Syntrophobacter fumaroxidans (strain DSM 10017 / MPOB).